A 149-amino-acid polypeptide reads, in one-letter code: 3-dehydroquinate dehydratase (149 aa).

Tyrosine 22 functions as the Proton acceptor in the catalytic mechanism. Residues asparagine 73, histidine 79, and aspartate 86 each coordinate substrate. Histidine 99 (proton donor) is an active-site residue. Substrate is bound by residues 100–101 (LS) and arginine 110.

Belongs to the type-II 3-dehydroquinase family. Homododecamer.

It catalyses the reaction 3-dehydroquinate = 3-dehydroshikimate + H2O. The protein operates within metabolic intermediate biosynthesis; chorismate biosynthesis; chorismate from D-erythrose 4-phosphate and phosphoenolpyruvate: step 3/7. Catalyzes a trans-dehydration via an enolate intermediate. This Prochlorococcus marinus (strain SARG / CCMP1375 / SS120) protein is 3-dehydroquinate dehydratase.